We begin with the raw amino-acid sequence, 376 residues long: Homoserine dehydrogenase (376 aa).

NADP(+) contacts are provided by N17 and I18. I18 contributes to the NAD(+) binding site. The NADPH site is built by I18, K67, T99, and K123. NADP(+) is bound by residues T99 and K123. T99 provides a ligand contact to NAD(+). Na(+) is bound by residues E150, V153, A155, and L157. The residue at position 201 (S201) is a Phosphoserine. NADP(+) contacts are provided by G213 and E216. L-homoserine-binding residues include E216 and D227. K231 (proton donor) is an active-site residue. G349 is a binding site for NADP(+). G349 contributes to the NAD(+) binding site. Residue G349 participates in NADPH binding.

Belongs to the homoserine dehydrogenase family. Requires a metal cation as cofactor.

It catalyses the reaction L-homoserine + NADP(+) = L-aspartate 4-semialdehyde + NADPH + H(+). The enzyme catalyses L-homoserine + NAD(+) = L-aspartate 4-semialdehyde + NADH + H(+). It participates in amino-acid biosynthesis; L-methionine biosynthesis via de novo pathway; L-homoserine from L-aspartate: step 3/3. The protein operates within amino-acid biosynthesis; L-threonine biosynthesis; L-threonine from L-aspartate: step 3/5. Catalyzes the conversion of L-aspartate-beta-semialdehyde (L-Asa) to L-homoserine (L-Hse), the third step in the biosynthesis of amino acids that derive from aspartate (the aspartate family of amino acids), including methioinine and threonine, the latter of which is a precursor to isoleucine; production of homoserine leads to a branch-point in the pathway as it can either be O-phosphorylated for processing to threonine, or O-acylated for processing to methionine. The sequence is that of Homoserine dehydrogenase from Schizosaccharomyces pombe (strain 972 / ATCC 24843) (Fission yeast).